A 162-amino-acid polypeptide reads, in one-letter code: Phosphopantetheine adenylyltransferase (162 aa).

Residue S11 participates in substrate binding. ATP-binding positions include 11–12 (SF) and H19. The substrate site is built by K43, V76, and R90. ATP-binding positions include 91–93 (GLR), E101, and 126–132 (HLYISSS).

It belongs to the bacterial CoaD family. Homohexamer. Mg(2+) serves as cofactor.

It localises to the cytoplasm. The catalysed reaction is (R)-4'-phosphopantetheine + ATP + H(+) = 3'-dephospho-CoA + diphosphate. It participates in cofactor biosynthesis; coenzyme A biosynthesis; CoA from (R)-pantothenate: step 4/5. Reversibly transfers an adenylyl group from ATP to 4'-phosphopantetheine, yielding dephospho-CoA (dPCoA) and pyrophosphate. The polypeptide is Phosphopantetheine adenylyltransferase (Streptococcus pneumoniae (strain Taiwan19F-14)).